The chain runs to 349 residues: Protein RecA (349 aa).

Position 64-71 (64-71 (GPESSGKT)) interacts with ATP.

The protein belongs to the RecA family.

Its subcellular location is the cytoplasm. Its function is as follows. Can catalyze the hydrolysis of ATP in the presence of single-stranded DNA, the ATP-dependent uptake of single-stranded DNA by duplex DNA, and the ATP-dependent hybridization of homologous single-stranded DNAs. It interacts with LexA causing its activation and leading to its autocatalytic cleavage. This Rhodopseudomonas palustris (strain ATCC BAA-98 / CGA009) protein is Protein RecA.